The following is a 469-amino-acid chain: Soluble pyridine nucleotide transhydrogenase (469 aa).

39 to 48 lines the FAD pocket; sequence ERENSVGGGC.

It belongs to the class-I pyridine nucleotide-disulfide oxidoreductase family. FAD serves as cofactor.

It is found in the cytoplasm. It catalyses the reaction NAD(+) + NADPH = NADH + NADP(+). Its function is as follows. Conversion of NADPH, generated by peripheral catabolic pathways, to NADH, which can enter the respiratory chain for energy generation. The protein is Soluble pyridine nucleotide transhydrogenase of Photobacterium profundum (strain SS9).